The following is a 332-amino-acid chain: Aquaporin-7-1 (332 aa).

Topologically, residues 1–66 are cytoplasmic; it reads MSGQHQITEQ…RHAIRMPMAE (66 aa). Residues 67–87 traverse the membrane as a helical segment; sequence FFGVALLIIFGAGSACQVVLS. Over 88–100 the chain is Extracellular; the sequence is TNPNVASSDRGSF. A helical membrane pass occupies residues 101–121; sequence LSINLGWAIGIAMGAWVSGGI. The Cytoplasmic segment spans residues 122–144; it reads SGGHINPAITIAMATYRGFPWRR. The NPA 1 signature appears at 127-129; that stretch reads NPA. Residues 145–165 form a helical membrane-spanning segment; that stretch reads VPSYIFAQVLGGVVGAALVYA. At 166–199 the chain is on the extracellular side; it reads NYIHAIDIFEGGRHVRTQATASLFATYALPYMTQ. Residues 200–220 form a helical membrane-spanning segment; it reads VSCFFSEFLATAVLSMMVLAL. The Cytoplasmic segment spans residues 221–230; that stretch reads TDNRNGAPTN. Residues 231 to 251 form a helical membrane-spanning segment; sequence GLLPFALFVLFIGLGASLGME. Topologically, residues 252–283 are extracellular; sequence TAYALNPARDFGPRLFLAMSGYGKALFNYRSQ. An NPA 2 motif is present at residues 257–259; that stretch reads NPA. A helical membrane pass occupies residues 284–304; that stretch reads YWLWAPIIAPVLGAQAGGLLY. At 305–332 the chain is on the cytoplasmic side; sequence DTFLYDGDNSPIKWRRASSQECQLAEVV.

The protein belongs to the MIP/aquaporin (TC 1.A.8) family.

The protein resides in the membrane. The catalysed reaction is H2O(in) = H2O(out). Its function is as follows. Water channel required to facilitate the transport of water across membranes. Does not mediate the transport carbon dioxide across the membrane. The polypeptide is Aquaporin-7-1 (Laccaria bicolor (Bicoloured deceiver)).